The sequence spans 427 residues: Glutamate-1-semialdehyde 2,1-aminomutase (427 aa).

Residue Lys265 is modified to N6-(pyridoxal phosphate)lysine.

The protein belongs to the class-III pyridoxal-phosphate-dependent aminotransferase family. HemL subfamily. As to quaternary structure, homodimer. Pyridoxal 5'-phosphate serves as cofactor.

It localises to the cytoplasm. It carries out the reaction (S)-4-amino-5-oxopentanoate = 5-aminolevulinate. The protein operates within porphyrin-containing compound metabolism; protoporphyrin-IX biosynthesis; 5-aminolevulinate from L-glutamyl-tRNA(Glu): step 2/2. This is Glutamate-1-semialdehyde 2,1-aminomutase from Bordetella parapertussis (strain 12822 / ATCC BAA-587 / NCTC 13253).